A 357-amino-acid polypeptide reads, in one-letter code: Serpentine receptor class epsilon-30 (357 aa).

7 consecutive transmembrane segments (helical) span residues 31 to 51 (IFEL…IFVM), 61 to 81 (LMFL…GKFI), 121 to 141 (LLIF…FGIL), 165 to 185 (IPII…LAII), 192 to 212 (FLAR…FLFI), 253 to 273 (LVVV…ALTF), and 283 to 303 (LIEN…MFSI).

This sequence belongs to the nematode receptor-like protein sre family.

The protein localises to the membrane. The sequence is that of Serpentine receptor class epsilon-30 (sre-30) from Caenorhabditis elegans.